We begin with the raw amino-acid sequence, 467 residues long: MAVDTMESVAVVAVPFPAQGHLNQLLHLSLLLASRGLSVHYAAPPPHVRQARARVHGWDPRALGSIRFHDLDVPPYDSPAPDLAAPSPFPNHLMPMFEAFAAAARAPLAALLQRLSTSYRRVAVVFDRLNPFAATEAARLANADAFGLQCVAISYNVGWLDPGHRLLSDYGLQFLPPDACMSREFVDLVFRMEEEEQGAPVAGLVMNTCRALEGEFLDVVAAQPPFQGQRFFAVGPLNPLLLDADAPTTPPGQARHECLEWLDRQPPESVLYVSFGTTSCLHADQVAELAAALKGSKQRFVWVLRDADRADIYAESGESRHAMFLSEFTRETEGTGLVITGWAPQLEILAHGATAAFMSHCGWNSTIESLSHGKPVLAWPMHSDQPWDSELLCKYFKAGLLVRPWEKHAEIVPAQAIQKVIEEAMLSDSGMAVRQRAKELGEAVRASVADGGNSRKDLDDFIGYITR.

H21 functions as the Proton acceptor in the catalytic mechanism. The an anthocyanidin site is built by H21 and N91. The active-site Charge relay is D127. Positions 343, 345, 360, 363, 364, 365, 368, 384, and 385 each coordinate UDP-alpha-D-glucose.

This sequence belongs to the UDP-glycosyltransferase family. Highly expressed in root. Expressed at lower level in kernel and cob. Weakly expressed in leaves. Weakly or not expressed in stems.

It carries out the reaction cis-zeatin + UDP-alpha-D-glucose = O-beta-D-glucosyl-cis-zeatin + UDP + H(+). Its function is as follows. Utilizes UDP-glucose as the sugar donor and catalyzes the formation of O-beta-D-glucosyl-cis-zeatin from cis-zeatin. May regulate active versus storage forms of cytokinins and could have an impact on seed growth. The protein is Cis-zeatin O-glucosyltransferase 1 (CISZOG1) of Zea mays (Maize).